Here is a 176-residue protein sequence, read N- to C-terminus: MLMPKKNRIAIHELLFKEGVMVAKKDVHMPKHPELADKNVPNLHVMKAMQSLKSRGCVKEQFAWRHFYWYLTNEGSQYLRDYLHLPPEIVPATLHLPPEIVPATLHRSRPETGRPRPKGLEGKRPARLTRREADRDTYRRCSVPPGADKKAEAGAGSATEFQFRGRCGRGRGQPPQ.

The interval 104-176 (TLHRSRPETG…CGRGRGQPPQ (73 aa)) is disordered. A compositionally biased stretch (basic and acidic residues) spans 108-139 (SRPETGRPRPKGLEGKRPARLTRREADRDTYR).

This sequence belongs to the eukaryotic ribosomal protein eS10 family.

The polypeptide is Putative ribosomal protein eS10-like (RPS10P5) (Homo sapiens (Human)).